The following is a 114-amino-acid chain: MHELSLVSSILDIIEDYAAQDGFRRVNNLRLSCGRLSGVDLQCLRFAFEVLSRETRSEGATLEIDFLPIVISCLNCGEDTEVEYVEASCPECGSENVLLAGGTEELRLLELDVD.

Histidine 2 is a binding site for Ni(2+). Cysteine 73, cysteine 76, cysteine 89, and cysteine 92 together coordinate Zn(2+).

Belongs to the HypA/HybF family.

Functionally, involved in the maturation of [NiFe] hydrogenases. Required for nickel insertion into the metal center of the hydrogenase. This is Hydrogenase maturation factor HypA from Syntrophus aciditrophicus (strain SB).